A 324-amino-acid polypeptide reads, in one-letter code: MNKIMLCLLVCGVVHAATYDLLKAPNYFEDFLHKFNKNYSSESEKLHRFKIFQHNLEEIINKNQNDSTAQYEINKFSDLSKEEAISKYTGLSLPHQTQNFCEVVILDRPPDRGPLEFDWRQFNKVTSVKNQGVCGACWAFATLGSLESQFAIKYNRLINLSEQQFIDCDRVNAGCDGGLLHTAFESAMEMGGVQMESDYPYETANGQCRINPNRFVVGVRSCRRYIVMFEEKLKDLLRAVGPIPVAIDASDIVNYRRGIMRQCANHGLNHAVLLVGYAVENNIPYWILKNTWGTDWGEDGYFRVQQNINACGIRNELVSSAEIY.

Positions 1 to 16 (MNKIMLCLLVCGVVHA) are cleaved as a signal peptide. Positions 17–113 (ATYDLLKAPN…VILDRPPDRG (97 aa)) are cleaved as a propeptide — activation peptide. 3 disulfide bridges follow: Cys134–Cys175, Cys168–Cys208, and Cys263–Cys311. Residue Cys137 is part of the active site. Asn159 carries an N-linked (GlcNAc...) asparagine; by host glycan. Active-site residues include His270 and Asn290.

Belongs to the peptidase C1 family. Post-translationally, synthesized as an inactive proenzyme and activated by proteolytic removal of the inhibitory propeptide.

It catalyses the reaction Endopeptidase of broad specificity, hydrolyzing substrates of both cathepsin L and cathepsin B.. Cysteine protease that plays an essential role in host liquefaction to facilitate horizontal transmission of the virus. May participate in the degradation of foreign protein expressed by the baculovirus system. In Orgyia pseudotsugata (Douglas-fir tussock moth), this protein is Viral cathepsin (VCATH).